Here is a 122-residue protein sequence, read N- to C-terminus: APPPVGDQAGGRKVDCFKYNTKGSAFACTRHERPVCGTDHRTYSNECMFCMLTQNKGFGVRILQDNECDIECTQYSDMCTMEYLPLCGSDGKNYSNKCLFCNAVMGSRGALFLAKHGQCQSP.

2 Kazal-like domains span residues 10 to 70 and 71 to 121; these read GGRK…ECDI and ECTQ…QCQS. 6 cysteine pairs are disulfide-bonded: Cys16-Cys50, Cys28-Cys47, Cys36-Cys68, Cys72-Cys101, Cys79-Cys98, and Cys87-Cys119.

It localises to the secreted. In terms of biological role, this inhibitor is composed of two homologous actively inhibiting halves: one which inhibits trypsin, the other which inhibits elastase. The protein is Double-headed protease inhibitor, submandibular gland of Panthera uncia (Snow leopard).